The primary structure comprises 526 residues: Meiotically up-regulated gene 99 protein, mitochondrial (526 aa).

Helical transmembrane passes span 398–418 and 421–441; these read TLYTTAFQGLGALGSLYLYFV and FSLYNAFSVFSVCGVFGLYYL.

It is found in the mitochondrion membrane. Functionally, required for correct meiotic chromosome segregation. Appears to also have role in sporulation. The sequence is that of Meiotically up-regulated gene 99 protein, mitochondrial (mug99) from Schizosaccharomyces pombe (strain 972 / ATCC 24843) (Fission yeast).